We begin with the raw amino-acid sequence, 149 residues long: Transcriptional regulator MraZ (149 aa).

SpoVT-AbrB domains lie at 7 to 54 (KYVN…GISH) and 83 to 126 (AVQL…QPQN).

The protein belongs to the MraZ family. Forms oligomers.

It is found in the cytoplasm. Its subcellular location is the nucleoid. The chain is Transcriptional regulator MraZ from Rickettsia rickettsii (strain Sheila Smith).